A 177-amino-acid polypeptide reads, in one-letter code: Thaumatin-like protein (177 aa).

Residues M1–A26 form the signal peptide.

The protein belongs to the thaumatin family.

The protein localises to the secreted. The protein is Thaumatin-like protein of Oryza sativa subsp. japonica (Rice).